The chain runs to 878 residues: Pyruvate dehydrogenase phosphatase regulatory subunit, mitochondrial (878 aa).

The N-terminal 93 residues, 1 to 93, are a transit peptide targeting the mitochondrion; the sequence is MLYRLLSIVQ…CAGILSTARH (93 aa).

It belongs to the GcvT family. In terms of assembly, heterodimer of a catalytic (PDP1) and a regulatory (PDPR) subunit.

The protein localises to the mitochondrion matrix. Its function is as follows. Decreases the sensitivity of PDP1 to magnesium ions, and this inhibition is reversed by the polyamine spermine. The polypeptide is Pyruvate dehydrogenase phosphatase regulatory subunit, mitochondrial (Pdpr) (Mus musculus (Mouse)).